The sequence spans 288 residues: 2-hydroxy-6-oxononadienedioate/2-hydroxy-6-oxononatrienedioate hydrolase (288 aa).

The 237-residue stretch at 38–274 (ALVLLHGSGP…RCGHWAQWEH (237 aa)) folds into the AB hydrolase-1 domain. Residue histidine 268 is the Proton acceptor of the active site.

This sequence belongs to the AB hydrolase superfamily. MhpC family. In terms of assembly, homodimer.

It catalyses the reaction (2Z,4E)-2-hydroxy-6-oxonona-2,4-dienedioate + H2O = (2Z)-2-hydroxypenta-2,4-dienoate + succinate + H(+). It carries out the reaction (2Z,4E,7E)-2-hydroxy-6-oxonona-2,4,7-trienedioate + H2O = (2Z)-2-hydroxypenta-2,4-dienoate + fumarate + H(+). Its pathway is aromatic compound metabolism; 3-phenylpropanoate degradation. Functionally, catalyzes the cleavage of the C5-C6 bond of 2-hydroxy-6-oxononadienedioate and 2-hydroxy-6-oxononatrienedioate, a dienol ring fission product of the bacterial meta-cleavage pathway for degradation of phenylpropionic acid. This chain is 2-hydroxy-6-oxononadienedioate/2-hydroxy-6-oxononatrienedioate hydrolase, found in Burkholderia vietnamiensis (strain G4 / LMG 22486) (Burkholderia cepacia (strain R1808)).